A 78-amino-acid polypeptide reads, in one-letter code: Broad mercury transporter MerE (78 aa).

The next 2 membrane-spanning stretches (helical) occupy residues 19–39 (LWGALAVLTCPCHLPILAAVL) and 47–67 (FLGEHWGVAALALTGLFVLAV).

The protein resides in the cell inner membrane. Functionally, broad mercury transporter that mediates the transport of both CH(3)Hg(I) and Hg(II) across the membrane. The chain is Broad mercury transporter MerE from Shigella flexneri.